We begin with the raw amino-acid sequence, 434 residues long: Phosphomethylpyrimidine synthase (434 aa).

Residues asparagine 74, methionine 103, tyrosine 132, histidine 171, 193–195, 234–237, and glutamate 273 contribute to the substrate site; these read SRG and DGIR. Histidine 277 provides a ligand contact to Zn(2+). Tyrosine 300 serves as a coordination point for substrate. Residue histidine 341 coordinates Zn(2+). [4Fe-4S] cluster-binding residues include cysteine 417, cysteine 420, and cysteine 424.

Belongs to the ThiC family. As to quaternary structure, homodimer. Requires [4Fe-4S] cluster as cofactor.

It catalyses the reaction 5-amino-1-(5-phospho-beta-D-ribosyl)imidazole + S-adenosyl-L-methionine = 4-amino-2-methyl-5-(phosphooxymethyl)pyrimidine + CO + 5'-deoxyadenosine + formate + L-methionine + 3 H(+). It functions in the pathway cofactor biosynthesis; thiamine diphosphate biosynthesis. Its function is as follows. Catalyzes the synthesis of the hydroxymethylpyrimidine phosphate (HMP-P) moiety of thiamine from aminoimidazole ribotide (AIR) in a radical S-adenosyl-L-methionine (SAM)-dependent reaction. This chain is Phosphomethylpyrimidine synthase, found in Desulfotalea psychrophila (strain LSv54 / DSM 12343).